Here is a 456-residue protein sequence, read N- to C-terminus: Enolase (456 aa).

Glutamine 164 is a binding site for (2R)-2-phosphoglycerate. The active-site Proton donor is the glutamate 207. Mg(2+) is bound by residues aspartate 244, glutamate 287, and aspartate 314. (2R)-2-phosphoglycerate-binding residues include lysine 339, arginine 368, serine 369, and lysine 390. The active-site Proton acceptor is lysine 339.

It belongs to the enolase family. As to quaternary structure, component of the RNA degradosome, a multiprotein complex involved in RNA processing and mRNA degradation. It depends on Mg(2+) as a cofactor.

Its subcellular location is the cytoplasm. It localises to the secreted. The protein localises to the cell surface. The enzyme catalyses (2R)-2-phosphoglycerate = phosphoenolpyruvate + H2O. Its pathway is carbohydrate degradation; glycolysis; pyruvate from D-glyceraldehyde 3-phosphate: step 4/5. In terms of biological role, catalyzes the reversible conversion of 2-phosphoglycerate (2-PG) into phosphoenolpyruvate (PEP). It is essential for the degradation of carbohydrates via glycolysis. In Francisella tularensis subsp. tularensis (strain FSC 198), this protein is Enolase.